The sequence spans 87 residues: Small ribosomal subunit protein bS18 (87 aa).

Residues 1-21 (MRHKPTPPKGNKSLGNALASK) are disordered.

It belongs to the bacterial ribosomal protein bS18 family. In terms of assembly, part of the 30S ribosomal subunit. Forms a tight heterodimer with protein bS6.

Functionally, binds as a heterodimer with protein bS6 to the central domain of the 16S rRNA, where it helps stabilize the platform of the 30S subunit. The chain is Small ribosomal subunit protein bS18 from Chlorobium phaeobacteroides (strain DSM 266 / SMG 266 / 2430).